The sequence spans 239 residues: Putative glutamine amidotransferase-like protein YfeJ (239 aa).

In terms of domain architecture, Glutamine amidotransferase type-1 spans 1–200 (MRVHFVVHES…IQHSQQELAD (200 aa)).

The protein is Putative glutamine amidotransferase-like protein YfeJ (yfeJ) of Salmonella typhimurium (strain LT2 / SGSC1412 / ATCC 700720).